We begin with the raw amino-acid sequence, 414 residues long: Serine hydroxymethyltransferase (414 aa).

(6S)-5,6,7,8-tetrahydrofolate-binding positions include L121 and 125 to 127 (GHL). K229 is modified (N6-(pyridoxal phosphate)lysine).

Belongs to the SHMT family. As to quaternary structure, homodimer. Requires pyridoxal 5'-phosphate as cofactor.

The protein resides in the cytoplasm. The enzyme catalyses (6R)-5,10-methylene-5,6,7,8-tetrahydrofolate + glycine + H2O = (6S)-5,6,7,8-tetrahydrofolate + L-serine. Its pathway is one-carbon metabolism; tetrahydrofolate interconversion. It functions in the pathway amino-acid biosynthesis; glycine biosynthesis; glycine from L-serine: step 1/1. Its function is as follows. Catalyzes the reversible interconversion of serine and glycine with tetrahydrofolate (THF) serving as the one-carbon carrier. This reaction serves as the major source of one-carbon groups required for the biosynthesis of purines, thymidylate, methionine, and other important biomolecules. Also exhibits THF-independent aldolase activity toward beta-hydroxyamino acids, producing glycine and aldehydes, via a retro-aldol mechanism. The protein is Serine hydroxymethyltransferase of Thiobacillus denitrificans (strain ATCC 25259 / T1).